The sequence spans 241 residues: Ribonuclease PH (241 aa).

Phosphate-binding positions include arginine 87 and 125-127 (GTR).

The protein belongs to the RNase PH family. Homohexameric ring arranged as a trimer of dimers.

It carries out the reaction tRNA(n+1) + phosphate = tRNA(n) + a ribonucleoside 5'-diphosphate. In terms of biological role, phosphorolytic 3'-5' exoribonuclease that plays an important role in tRNA 3'-end maturation. Removes nucleotide residues following the 3'-CCA terminus of tRNAs; can also add nucleotides to the ends of RNA molecules by using nucleoside diphosphates as substrates, but this may not be physiologically important. Probably plays a role in initiation of 16S rRNA degradation (leading to ribosome degradation) during starvation. This Salinispora tropica (strain ATCC BAA-916 / DSM 44818 / JCM 13857 / NBRC 105044 / CNB-440) protein is Ribonuclease PH.